A 373-amino-acid polypeptide reads, in one-letter code: 4-hydroxy-3-methylbut-2-en-1-yl diphosphate synthase (flavodoxin) (373 aa).

4 residues coordinate [4Fe-4S] cluster: Cys-269, Cys-272, Cys-304, and Glu-311.

The protein belongs to the IspG family. It depends on [4Fe-4S] cluster as a cofactor.

The catalysed reaction is (2E)-4-hydroxy-3-methylbut-2-enyl diphosphate + oxidized [flavodoxin] + H2O + 2 H(+) = 2-C-methyl-D-erythritol 2,4-cyclic diphosphate + reduced [flavodoxin]. The protein operates within isoprenoid biosynthesis; isopentenyl diphosphate biosynthesis via DXP pathway; isopentenyl diphosphate from 1-deoxy-D-xylulose 5-phosphate: step 5/6. Converts 2C-methyl-D-erythritol 2,4-cyclodiphosphate (ME-2,4cPP) into 1-hydroxy-2-methyl-2-(E)-butenyl 4-diphosphate. In Baumannia cicadellinicola subsp. Homalodisca coagulata, this protein is 4-hydroxy-3-methylbut-2-en-1-yl diphosphate synthase (flavodoxin).